A 97-amino-acid chain; its full sequence is Secreted Ly-6/uPAR domain-containing protein 2 (97 aa).

The N-terminal stretch at 1-22 (MQLGTGLLLAAVLSLQLAAAEA) is a signal peptide. 5 disulfide bridges follow: Cys-25-Cys-47, Cys-28-Cys-34, Cys-40-Cys-68, Cys-72-Cys-88, and Cys-89-Cys-94. The region spanning 25-95 (CHQCTGFGGC…IACCQTSLCN (71 aa)) is the UPAR/Ly6 domain.

Interacts with CHRNA3, CHRNA4, CHRNA5, CHRNA7, CHRNB2 and CHRNB4. Interacts with CHRM1 and CHRM3 probably in an allosteric manner. In terms of tissue distribution, expressed at highest levels in cervix and esophagus, followed by adult and fetal skin. Expressed at lower levels in brain, lung, stomach, small intestine, colon, rectum, uterus, and thymus. Not detected in spleen nor bone marrow. Up-regulated 3-fold in psoriatic lesional skin. In the epidermis, predominantly produced by keratinocytes of the suprabasal epidermal compartment (at protein level). In attached gingiva, produced at highest levels by basal cells located in the lowermost epithelial layers (at protein level). Detected in serum (at protein level).

It is found in the secreted. Functionally, binds and may modulate the functional properties of nicotinic and muscarinic acetylcholine receptors. May regulate keratinocytes proliferation, differentiation and apoptosis. In vitro moderately inhibits ACh-evoked currents of alpha-3:beta-2-containing nAChRs and strongly these of alpha-4:beta-2-containing nAChRs, modulates alpha-7-containing nAChRs, and inhibits nicotine-induced signaling probably implicating alpha-3:beta-4-containing nAChRs. Proposed to act on alpha-3:beta-2 and alpha-7 nAChRs in an orthosteric, and on mAChRs, such as CHRM1 and CHRM3, in an allosteric manner. The protein is Secreted Ly-6/uPAR domain-containing protein 2 of Homo sapiens (Human).